A 154-amino-acid chain; its full sequence is Myoglobin (154 aa).

In terms of domain architecture, Globin spans 2-148 (GLSDQEWQQV…FRNDMASKYK (147 aa)). H65 is a nitrite binding site. H65 is a binding site for O2. Residue H94 coordinates heme b.

It belongs to the globin family. In terms of assembly, monomeric.

The protein resides in the cytoplasm. It is found in the sarcoplasm. The catalysed reaction is Fe(III)-heme b-[protein] + nitric oxide + H2O = Fe(II)-heme b-[protein] + nitrite + 2 H(+). It catalyses the reaction H2O2 + AH2 = A + 2 H2O. Functionally, monomeric heme protein which primary function is to store oxygen and facilitate its diffusion within muscle tissues. Reversibly binds oxygen through a pentacoordinated heme iron and enables its timely and efficient release as needed during periods of heightened demand. Depending on the oxidative conditions of tissues and cells, and in addition to its ability to bind oxygen, it also has a nitrite reductase activity whereby it regulates the production of bioactive nitric oxide. Under stress conditions, like hypoxia and anoxia, it also protects cells against reactive oxygen species thanks to its pseudoperoxidase activity. This Gallus gallus (Chicken) protein is Myoglobin (MB).